The sequence spans 291 residues: Nucleotide-binding protein LJ_0866 (291 aa).

13–20 (GMSGAGKT) is an ATP binding site. 63 to 66 (DLRV) contributes to the GTP binding site.

This sequence belongs to the RapZ-like family.

Displays ATPase and GTPase activities. This is Nucleotide-binding protein LJ_0866 from Lactobacillus johnsonii (strain CNCM I-12250 / La1 / NCC 533).